The following is a 496-amino-acid chain: Probable cytosol aminopeptidase (496 aa).

Mn(2+) is bound by residues Lys-262 and Asp-267. Lys-274 is an active-site residue. Mn(2+) contacts are provided by Asp-285, Asp-344, and Glu-346. Arg-348 is an active-site residue.

The protein belongs to the peptidase M17 family. It depends on Mn(2+) as a cofactor.

It localises to the cytoplasm. The enzyme catalyses Release of an N-terminal amino acid, Xaa-|-Yaa-, in which Xaa is preferably Leu, but may be other amino acids including Pro although not Arg or Lys, and Yaa may be Pro. Amino acid amides and methyl esters are also readily hydrolyzed, but rates on arylamides are exceedingly low.. It catalyses the reaction Release of an N-terminal amino acid, preferentially leucine, but not glutamic or aspartic acids.. Functionally, presumably involved in the processing and regular turnover of intracellular proteins. Catalyzes the removal of unsubstituted N-terminal amino acids from various peptides. In Rhizobium leguminosarum bv. trifolii (strain WSM2304), this protein is Probable cytosol aminopeptidase.